A 735-amino-acid chain; its full sequence is Phosphoribosylformylglycinamidine synthase subunit PurL (735 aa).

H44 is an active-site residue. ATP-binding residues include Y47 and K86. Residue E88 coordinates Mg(2+). Substrate is bound by residues 89–92 (SHNH) and R111. H90 acts as the Proton acceptor in catalysis. D112 lines the Mg(2+) pocket. Q240 lines the substrate pocket. D268 contributes to the Mg(2+) binding site. 312–314 (ESQ) contributes to the substrate binding site. ATP contacts are provided by D496 and G533. N534 is a Mg(2+) binding site. Residue S536 participates in substrate binding.

This sequence belongs to the FGAMS family. Monomer. Part of the FGAM synthase complex composed of 1 PurL, 1 PurQ and 2 PurS subunits.

It is found in the cytoplasm. It carries out the reaction N(2)-formyl-N(1)-(5-phospho-beta-D-ribosyl)glycinamide + L-glutamine + ATP + H2O = 2-formamido-N(1)-(5-O-phospho-beta-D-ribosyl)acetamidine + L-glutamate + ADP + phosphate + H(+). Its pathway is purine metabolism; IMP biosynthesis via de novo pathway; 5-amino-1-(5-phospho-D-ribosyl)imidazole from N(2)-formyl-N(1)-(5-phospho-D-ribosyl)glycinamide: step 1/2. Functionally, part of the phosphoribosylformylglycinamidine synthase complex involved in the purines biosynthetic pathway. Catalyzes the ATP-dependent conversion of formylglycinamide ribonucleotide (FGAR) and glutamine to yield formylglycinamidine ribonucleotide (FGAM) and glutamate. The FGAM synthase complex is composed of three subunits. PurQ produces an ammonia molecule by converting glutamine to glutamate. PurL transfers the ammonia molecule to FGAR to form FGAM in an ATP-dependent manner. PurS interacts with PurQ and PurL and is thought to assist in the transfer of the ammonia molecule from PurQ to PurL. The sequence is that of Phosphoribosylformylglycinamidine synthase subunit PurL from Nitratiruptor sp. (strain SB155-2).